Consider the following 189-residue polypeptide: ATP synthase subunit b (189 aa).

Residues 7 to 27 (LLIAALAVAPLAHAAEGGFVG) form a helical membrane-spanning segment.

It belongs to the ATPase B chain family. As to quaternary structure, F-type ATPases have 2 components, F(1) - the catalytic core - and F(0) - the membrane proton channel. F(1) has five subunits: alpha(3), beta(3), gamma(1), delta(1), epsilon(1). F(0) has three main subunits: a(1), b(2) and c(10-14). The alpha and beta chains form an alternating ring which encloses part of the gamma chain. F(1) is attached to F(0) by a central stalk formed by the gamma and epsilon chains, while a peripheral stalk is formed by the delta and b chains.

It localises to the cell inner membrane. In terms of biological role, f(1)F(0) ATP synthase produces ATP from ADP in the presence of a proton or sodium gradient. F-type ATPases consist of two structural domains, F(1) containing the extramembraneous catalytic core and F(0) containing the membrane proton channel, linked together by a central stalk and a peripheral stalk. During catalysis, ATP synthesis in the catalytic domain of F(1) is coupled via a rotary mechanism of the central stalk subunits to proton translocation. Component of the F(0) channel, it forms part of the peripheral stalk, linking F(1) to F(0). This Hyphomonas neptunium (strain ATCC 15444) protein is ATP synthase subunit b.